The chain runs to 121 residues: Small ribosomal subunit protein uS13 (121 aa).

Residues 94 to 121 are disordered; that stretch reads GLPVRGQNTKNNARTRKGPRRTVANKKK. A compositionally biased stretch (basic residues) spans 106-121; the sequence is ARTRKGPRRTVANKKK.

This sequence belongs to the universal ribosomal protein uS13 family. As to quaternary structure, part of the 30S ribosomal subunit. Forms a loose heterodimer with protein S19. Forms two bridges to the 50S subunit in the 70S ribosome.

In terms of biological role, located at the top of the head of the 30S subunit, it contacts several helices of the 16S rRNA. In the 70S ribosome it contacts the 23S rRNA (bridge B1a) and protein L5 of the 50S subunit (bridge B1b), connecting the 2 subunits; these bridges are implicated in subunit movement. Contacts the tRNAs in the A and P-sites. In Anoxybacillus flavithermus (strain DSM 21510 / WK1), this protein is Small ribosomal subunit protein uS13.